Consider the following 158-residue polypeptide: Cyclic pyranopterin monophosphate synthase (158 aa).

Substrate is bound by residues 74–76 (MCH) and 112–113 (ME). The active site involves D127.

The protein belongs to the MoaC family. As to quaternary structure, homohexamer; trimer of dimers.

The enzyme catalyses (8S)-3',8-cyclo-7,8-dihydroguanosine 5'-triphosphate = cyclic pyranopterin phosphate + diphosphate. It participates in cofactor biosynthesis; molybdopterin biosynthesis. Its function is as follows. Catalyzes the conversion of (8S)-3',8-cyclo-7,8-dihydroguanosine 5'-triphosphate to cyclic pyranopterin monophosphate (cPMP). The protein is Cyclic pyranopterin monophosphate synthase of Helicobacter pylori (strain ATCC 700392 / 26695) (Campylobacter pylori).